The chain runs to 1040 residues: Regulator of telomere elongation helicase 1 homolog (1040 aa).

The Helicase ATP-binding domain occupies 52 to 355 (RGINVEFPFE…KGLLLKLQEL (304 aa)). 87 to 94 (SPTGTGKT) is an ATP binding site. The disordered stretch occupies residues 117–137 (RKNSAIPWSDSDEPLSQSGGG). The [4Fe-4S] cluster site is built by Cys181, Cys202, Cys210, and Cys246. Positions 289-292 (DEAH) match the DEAH box motif. A disordered region spans residues 926-949 (KVPESQGSASSSVLTAKGNGGGDK). Positions 930 to 939 (SQGSASSSVL) are enriched in polar residues. A PIP-box; degenerate motif is present at residues 992-999 (QSIVQLFC).

It belongs to the helicase family. RAD3/XPD subfamily.

It localises to the nucleus. The catalysed reaction is ATP + H2O = ADP + phosphate + H(+). Its function is as follows. A probable ATP-dependent DNA helicase implicated in DNA replication, DNA repair and the maintenance of genomic stability. Acts as an anti-recombinase to counteract toxic recombination and limit crossover during meiosis. Regulates meiotic recombination and crossover homeostasis by physically dissociating strand invasion events and thereby promotes noncrossover repair by meiotic synthesis dependent strand annealing (SDSA) as well as disassembly of D loop recombination intermediates. Also plays a role in preserving the stability of 45S rDNA repeats. The protein is Regulator of telomere elongation helicase 1 homolog of Arabidopsis thaliana (Mouse-ear cress).